The chain runs to 325 residues: GMP reductase (325 aa).

The active-site Thioimidate intermediate is cysteine 174. 203 to 226 serves as a coordination point for NADP(+); the sequence is LIADGGIRTHGDIAKSIRFGASMV.

The protein belongs to the IMPDH/GMPR family. GuaC type 2 subfamily.

The enzyme catalyses IMP + NH4(+) + NADP(+) = GMP + NADPH + 2 H(+). Functionally, catalyzes the irreversible NADPH-dependent deamination of GMP to IMP. It functions in the conversion of nucleobase, nucleoside and nucleotide derivatives of G to A nucleotides, and in maintaining the intracellular balance of A and G nucleotides. This is GMP reductase from Staphylococcus aureus (strain JH9).